A 488-amino-acid chain; its full sequence is Glutamyl-tRNA(Gln) amidotransferase subunit A (488 aa).

Catalysis depends on charge relay system residues Lys-77 and Ser-152. Ser-176 acts as the Acyl-ester intermediate in catalysis.

Belongs to the amidase family. GatA subfamily. In terms of assembly, heterotrimer of A, B and C subunits.

The enzyme catalyses L-glutamyl-tRNA(Gln) + L-glutamine + ATP + H2O = L-glutaminyl-tRNA(Gln) + L-glutamate + ADP + phosphate + H(+). Functionally, allows the formation of correctly charged Gln-tRNA(Gln) through the transamidation of misacylated Glu-tRNA(Gln) in organisms which lack glutaminyl-tRNA synthetase. The reaction takes place in the presence of glutamine and ATP through an activated gamma-phospho-Glu-tRNA(Gln). In Streptococcus pyogenes serotype M1, this protein is Glutamyl-tRNA(Gln) amidotransferase subunit A.